Here is a 158-residue protein sequence, read N- to C-terminus: Small ribosomal subunit protein uS15 (158 aa).

Residues M1 to P18 are compositionally biased toward basic residues. Residues M1–A21 are disordered.

Belongs to the universal ribosomal protein uS15 family. As to quaternary structure, part of the 30S ribosomal subunit.

In Pyrococcus abyssi (strain GE5 / Orsay), this protein is Small ribosomal subunit protein uS15.